Consider the following 469-residue polypeptide: Serine hydroxymethyltransferase, cytosolic (469 aa).

Lysine 248 is modified (N6-(pyridoxal phosphate)lysine).

The protein belongs to the SHMT family. As to quaternary structure, homotetramer. It depends on pyridoxal 5'-phosphate as a cofactor.

It localises to the cytoplasm. It catalyses the reaction (6R)-5,10-methylene-5,6,7,8-tetrahydrofolate + glycine + H2O = (6S)-5,6,7,8-tetrahydrofolate + L-serine. It participates in one-carbon metabolism; tetrahydrofolate interconversion. Its function is as follows. Interconversion of serine and glycine. The protein is Serine hydroxymethyltransferase, cytosolic (SHM2) of Eremothecium gossypii (strain ATCC 10895 / CBS 109.51 / FGSC 9923 / NRRL Y-1056) (Yeast).